A 316-amino-acid chain; its full sequence is Protein lifeguard 2 (316 aa).

The tract at residues 1-46 (MTQGKLSVANKAPGTEGQQQANGEKKETPAVPSAPPSYEEATSGEG) is disordered. A run of 3 helical transmembrane segments spans residues 106–126 (VYTI…LFTF), 138–158 (PGWY…LACC), and 165–185 (FPWN…LTGM). Asparagine 191 carries an N-linked (GlcNAc...) asparagine glycan. A run of 4 helical transmembrane segments spans residues 194 to 214 (SVLL…VFSF), 225 to 245 (GVLF…AILL), 251 to 271 (PWLH…FLAF), and 290 to 310 (IFGA…FLQL).

The protein belongs to the BI1 family. LFG subfamily. Interacts with FAS/TNFRSF6 and BAX.

The protein localises to the cell membrane. Its subcellular location is the membrane raft. It localises to the postsynaptic cell membrane. Its function is as follows. Antiapoptotic protein which protects cells uniquely from Fas-induced apoptosis. Regulates Fas-mediated apoptosis in neurons by interfering with caspase-8 activation. Plays a role in cerebellar development by affecting cerebellar size, internal granular layer (IGL) thickness, and Purkinje cell (PC) development. The sequence is that of Protein lifeguard 2 (FAIM2) from Bos taurus (Bovine).